The following is a 490-amino-acid chain: Phosphoglucosamine mutase (490 aa).

The Phosphoserine intermediate role is filled by S139. 4 residues coordinate Mg(2+): S139, D279, D281, and D283. S139 is subject to Phosphoserine.

The protein belongs to the phosphohexose mutase family. Requires Mg(2+) as cofactor. Post-translationally, activated by phosphorylation.

It carries out the reaction alpha-D-glucosamine 1-phosphate = D-glucosamine 6-phosphate. Catalyzes the conversion of glucosamine-6-phosphate to glucosamine-1-phosphate. The sequence is that of Phosphoglucosamine mutase from Nostoc sp. (strain PCC 7120 / SAG 25.82 / UTEX 2576).